A 359-amino-acid polypeptide reads, in one-letter code: Dihydroorotate dehydrogenase (quinone) (359 aa).

FMN is bound by residues 68–72 and A92; that span reads AGFDK. Residue K72 participates in substrate binding. 117–121 provides a ligand contact to substrate; it reads NAYGF. Positions 146 and 179 each coordinate FMN. N179 lines the substrate pocket. The Nucleophile role is filled by S182. N184 provides a ligand contact to substrate. Positions 215 and 243 each coordinate FMN. 244–245 contributes to the substrate binding site; it reads NT. Residues G263, G292, and 313 to 314 each bind FMN; that span reads YT.

This sequence belongs to the dihydroorotate dehydrogenase family. Type 2 subfamily. As to quaternary structure, monomer. FMN serves as cofactor.

It localises to the cell membrane. It catalyses the reaction (S)-dihydroorotate + a quinone = orotate + a quinol. Its pathway is pyrimidine metabolism; UMP biosynthesis via de novo pathway; orotate from (S)-dihydroorotate (quinone route): step 1/1. In terms of biological role, catalyzes the conversion of dihydroorotate to orotate with quinone as electron acceptor. The sequence is that of Dihydroorotate dehydrogenase (quinone) from Nautilia profundicola (strain ATCC BAA-1463 / DSM 18972 / AmH).